The following is a 563-amino-acid chain: Nigrin b (563 aa).

Residues 1–25 (MRVVAAAMLYFYIVVLAICSVGIQG) form the signal peptide. The active site involves Glu-188. Asn-221 is a glycosylation site (N-linked (GlcNAc...) asparagine). 3 cysteine pairs are disulfide-bonded: Cys-274-Cys-302, Cys-319-Cys-338, and Cys-360-Cys-377. Ricin B-type lectin domains follow at residues 305-431 (RTSF…WTVT) and 434-559 (VKPI…WVTQ). A 1-alpha repeat occupies 316 to 356 (DGLCVDVRNGYDTDGTPLQLWPCGTQRNQRWTFDSDDTIRS). Residues 357–397 (MGKCMTANGLNNGSNIVIFNCSTAAENAIKWEVPIDGSIIN) form a 1-beta repeat. N-linked (GlcNAc...) asparagine glycans are attached at residues Asn-368 and Asn-376. A 1-gamma repeat occupies 400–432 (SGLVMTAPRAASRTILLLEDNIYAASQGWTVTN). One copy of the 2-alpha repeat lies at 445 to 482 (KEMCLQSNGENNGVWMEDCEATSLQQQWALYGDRTIRV). An intrachain disulfide couples Cys-448 to Cys-463. Asn-483 is a glycosylation site (N-linked (GlcNAc...) asparagine). The 2-beta repeat unit spans residues 486-524 (RGLCVTTNGYNSKDLIIILKCQGLPSQRWFFNSDGAIVN). A disulfide bridge connects residues Cys-489 and Cys-506. The stretch at 527 to 554 (SRHVMDVRASNVSLREIIIFPATGNPNQ) is one 2-gamma repeat. The N-linked (GlcNAc...) asparagine glycan is linked to Asn-537.

The protein in the N-terminal section; belongs to the ribosome-inactivating protein family. Type 2 RIP subfamily. In terms of assembly, disulfide-linked dimer of A and B chains.

The enzyme catalyses Endohydrolysis of the N-glycosidic bond at one specific adenosine on the 28S rRNA.. Non-toxic type 2 RIP which strongly inhibits mammalian protein synthesis but does not affect plant nor bacterial protein synthesis. The A chain is responsible for inhibiting protein synthesis through the catalytic inactivation of 60S ribosomal subunits by removing adenine from position 4,324 of 28S rRNA. Its function is as follows. The B chain is a galactose-specific lectin that facilitates the binding of nigrin b to the cell membrane that precedes endocytosis. This Sambucus nigra (European elder) protein is Nigrin b.